The sequence spans 919 residues: Glutamate receptor ionotropic, kainate 3 (919 aa).

An N-terminal signal peptide occupies residues 1–31; it reads MTAPWRRLRSLVWEYWAGFLVCAFWIPDSRG. Residues 32 to 563 lie on the Extracellular side of the membrane; it reads MPHVIRIGGI…VFSFLNPLSP (532 aa). N-linked (GlcNAc...) asparagine glycans are attached at residues asparagine 70, asparagine 76, asparagine 278, asparagine 381, asparagine 415, asparagine 426, and asparagine 433. Residues cysteine 99 and cysteine 350 are joined by a disulfide bond. Residues proline 518, threonine 520, and arginine 525 each contribute to the L-glutamate site. N-linked (GlcNAc...) asparagine glycans are attached at residues asparagine 548 and asparagine 551. Residues 564–584 form a helical membrane-spanning segment; it reads DIWMYVLLAYLGVSCVLFVIA. Residues 585–636 are Cytoplasmic-facing; sequence RFSPYEWYDAHPCNPGSEVVENNFTLLNSFWFGMGSLMQQGSELMPKALSTR. Residues 637-657 form a helical membrane-spanning segment; that stretch reads IIGGIWWFFTLIIISSYTANL. Residues 658–820 are Extracellular-facing; that stretch reads AAFLTVERME…KEASALGIQK (163 aa). The L-glutamate site is built by alanine 691, threonine 692, and glutamate 739. The N-linked (GlcNAc...) asparagine glycan is linked to asparagine 752. A helical membrane pass occupies residues 821–841; it reads IGGIFIVLAAGLVLSVLVAVG. The Cytoplasmic segment spans residues 842 to 919; the sequence is EFIYKLRKTA…CSTSLAPVFP (78 aa). A Phosphoserine modification is found at serine 869. Lysine 887 is covalently cross-linked (Glycyl lysine isopeptide (Lys-Gly) (interchain with G-Cter in SUMO1)).

Belongs to the glutamate-gated ion channel (TC 1.A.10.1) family. GRIK3 subfamily. As to quaternary structure, homotetramer, and heterotetramer with GRIK4 or GRIK5. Can form functional heteromeric receptors with GRIK2. Interacts with PRKCABP. Interacts with NETO2. Homomeric GluR7A forms functional kainate receptors which have very low sensitivity to glutamate. Can form functional heteromeric receptors with GRIK4 and GRIK5. In terms of assembly, homomeric GluR7B forms functional kainate receptors. Post-translationally, mass spectrometry data suggest the protein is N-glycosylated at five distinct sites. As to expression, expressed in the olfactory bulb (at protein level). Expressed in the deep cortical layers, dentate gyrus, reticular thalamic nucleus, mammillary bodies, pons, and cerebellum of the adult.

It localises to the cell membrane. The protein resides in the postsynaptic cell membrane. The enzyme catalyses Ca(2+)(in) = Ca(2+)(out). Ionotropic glutamate receptor that functions as a cation-permeable ligand-gated ion channel, gated by L-glutamate and the glutamatergic agonist kainic acid. Binding of the excitatory neurotransmitter L-glutamate induces a conformation change, leading to the opening of the cation channel, and thereby converts the chemical signal to an electrical impulse. The receptor then desensitizes rapidly and enters a transient inactive state, characterized by the presence of bound agonist. In association with GRIK2, involved in presynaptic facilitation of glutamate release at hippocampal mossy fiber synapses. In terms of biological role, ionotropic glutamate receptor that functions as a ligand-gated cation channel, gated by L-glutamate and the glutamatergic agonist kainic acid. The polypeptide is Glutamate receptor ionotropic, kainate 3 (Grik3) (Rattus norvegicus (Rat)).